The chain runs to 299 residues: Beta-lactamase VEB-1 (299 aa).

The signal sequence occupies residues 1–23; it reads MKIVKRILLVLLSLFFTIVYSNA. Ser-68 (nucleophile; acyl-ester intermediate) is an active-site residue. Residues Lys-71, Ser-131, and Glu-167 each contribute to the a beta-lactam site. Residue Glu-167 is the Proton acceptor of the active site.

This sequence belongs to the class-A beta-lactamase family.

It carries out the reaction a beta-lactam + H2O = a substituted beta-amino acid. With respect to regulation, inhibited by the beta-lactamase-blocking agent clavulanic acid. Class A beta-lactamase which confers resistance to the beta-lactam antibiotics, including penicillins and cephalosporins, in E.coli strain JM109. Acts via hydrolysis of the beta-lactam ring. Has penicillin-, and cephalosporin-hydrolyzing activities. The protein is Beta-lactamase VEB-1 of Pseudomonas aeruginosa.